The primary structure comprises 411 residues: Peptidase T (411 aa).

Histidine 79 is a binding site for Zn(2+). Aspartate 81 is an active-site residue. Aspartate 142 contributes to the Zn(2+) binding site. The Proton acceptor role is filled by glutamate 176. 3 residues coordinate Zn(2+): glutamate 177, aspartate 199, and histidine 381.

The protein belongs to the peptidase M20B family. Zn(2+) serves as cofactor.

It is found in the cytoplasm. The catalysed reaction is Release of the N-terminal residue from a tripeptide.. Cleaves the N-terminal amino acid of tripeptides. The polypeptide is Peptidase T (Exiguobacterium sibiricum (strain DSM 17290 / CCUG 55495 / CIP 109462 / JCM 13490 / 255-15)).